A 244-amino-acid chain; its full sequence is tRNA pseudouridine synthase A (244 aa).

Catalysis depends on D52, which acts as the Nucleophile. Substrate is bound at residue Y111.

This sequence belongs to the tRNA pseudouridine synthase TruA family. Homodimer.

The enzyme catalyses uridine(38/39/40) in tRNA = pseudouridine(38/39/40) in tRNA. Its function is as follows. Formation of pseudouridine at positions 38, 39 and 40 in the anticodon stem and loop of transfer RNAs. This chain is tRNA pseudouridine synthase A, found in Thermosipho melanesiensis (strain DSM 12029 / CIP 104789 / BI429).